The following is a 155-amino-acid chain: Aspartate carbamoyltransferase regulatory chain (155 aa).

Zn(2+) contacts are provided by cysteine 109, cysteine 114, cysteine 138, and cysteine 141.

It belongs to the PyrI family. In terms of assembly, contains catalytic and regulatory chains. The cofactor is Zn(2+).

Involved in allosteric regulation of aspartate carbamoyltransferase. This is Aspartate carbamoyltransferase regulatory chain from Vibrio cholerae serotype O1 (strain ATCC 39541 / Classical Ogawa 395 / O395).